A 453-amino-acid chain; its full sequence is Elongation factor 1-alpha (453 aa).

A tr-type G domain is found at 5–230 (KTHINIVVIG…DAIVEPKRPH (226 aa)). Residues 14 to 21 (GHVDAGKS) form a G1 region. GTP is bound at residue 14–21 (GHVDAGKS). The segment at 70 to 74 (GITID) is G2. The tract at residues 91–94 (DAPG) is G3. GTP-binding positions include 91–95 (DAPGH) and 153–156 (NKMD). Residues 153 to 156 (NKMD) are G4. Positions 194–196 (SGW) are G5.

Belongs to the TRAFAC class translation factor GTPase superfamily. Classic translation factor GTPase family. EF-Tu/EF-1A subfamily. Binds to actin.

It localises to the cytoplasm. Functionally, this protein promotes the GTP-dependent binding of aminoacyl-tRNA to the A-site of ribosomes during protein biosynthesis. It is also an abundant actin filament bundling protein. This is Elongation factor 1-alpha (eef1a2) from Dictyostelium discoideum (Social amoeba).